The sequence spans 212 residues: Orotate phosphoribosyltransferase (212 aa).

Residues Arg-97, Lys-101, His-103, and 123-131 (DDLISTGGS) each bind 5-phospho-alpha-D-ribose 1-diphosphate. Residue Ser-127 coordinates orotate.

Belongs to the purine/pyrimidine phosphoribosyltransferase family. PyrE subfamily. As to quaternary structure, homodimer. Mg(2+) is required as a cofactor.

The catalysed reaction is orotidine 5'-phosphate + diphosphate = orotate + 5-phospho-alpha-D-ribose 1-diphosphate. It functions in the pathway pyrimidine metabolism; UMP biosynthesis via de novo pathway; UMP from orotate: step 1/2. Catalyzes the transfer of a ribosyl phosphate group from 5-phosphoribose 1-diphosphate to orotate, leading to the formation of orotidine monophosphate (OMP). This chain is Orotate phosphoribosyltransferase, found in Lactiplantibacillus plantarum (strain ATCC BAA-793 / NCIMB 8826 / WCFS1) (Lactobacillus plantarum).